The sequence spans 275 residues: Ribosomal RNA small subunit methyltransferase A (275 aa).

S-adenosyl-L-methionine is bound by residues Asn19, Leu21, Gly46, Glu71, Asp94, and Asn117.

It belongs to the class I-like SAM-binding methyltransferase superfamily. rRNA adenine N(6)-methyltransferase family. RsmA subfamily.

The protein resides in the cytoplasm. The catalysed reaction is adenosine(1518)/adenosine(1519) in 16S rRNA + 4 S-adenosyl-L-methionine = N(6)-dimethyladenosine(1518)/N(6)-dimethyladenosine(1519) in 16S rRNA + 4 S-adenosyl-L-homocysteine + 4 H(+). Functionally, specifically dimethylates two adjacent adenosines (A1518 and A1519) in the loop of a conserved hairpin near the 3'-end of 16S rRNA in the 30S particle. May play a critical role in biogenesis of 30S subunits. This chain is Ribosomal RNA small subunit methyltransferase A, found in Burkholderia thailandensis (strain ATCC 700388 / DSM 13276 / CCUG 48851 / CIP 106301 / E264).